The chain runs to 100 residues: Omega-hexatoxin-Asp2b (100 aa).

The N-terminal stretch at 1 to 23 (MKFSKLSITLAVILTQAVFVLCG) is a signal peptide. Residues 24–55 (MKNEDFMEKGLESNELHDAIKKPVNSGKPDTE) constitute a propeptide that is removed on maturation. Intrachain disulfides connect C60/C73, C66/C79, and C72/C84.

Belongs to the neurotoxin 15 family. 02 (omega-actx) subfamily. Expressed by the venom gland.

The protein localises to the secreted. Functionally, potent inhibitor of insect, but not mammalian, voltage-gated calcium channels (Cav). The chain is Omega-hexatoxin-Asp2b from Atrax sp. (strain Illawarra) (Funnel-web spider).